A 498-amino-acid chain; its full sequence is Lysine--tRNA ligase (498 aa).

Mg(2+) contacts are provided by glutamate 409 and glutamate 416.

The protein belongs to the class-II aminoacyl-tRNA synthetase family. Homodimer. Requires Mg(2+) as cofactor.

The protein resides in the cytoplasm. It carries out the reaction tRNA(Lys) + L-lysine + ATP = L-lysyl-tRNA(Lys) + AMP + diphosphate. This chain is Lysine--tRNA ligase, found in Dichelobacter nodosus (strain VCS1703A).